A 466-amino-acid polypeptide reads, in one-letter code: Zinc metalloproteinase/disintegrin (466 aa).

Residues 1 to 6 (FPYQGS) form the signal peptide. A propeptide spanning residues 7-174 (SIILESGNVN…PIKKASQLIV (168 aa)) is cleaved from the precursor. In terms of domain architecture, Peptidase M12B spans 180–377 (RYMEIVIVVD…ENPPCILNKP (198 aa)). Residues Glu183 and Asp267 each contribute to the Ca(2+) site. Disulfide bonds link Cys291-Cys372, Cys331-Cys356, and Cys333-Cys339. Position 316 (His316) interacts with Zn(2+). Glu317 is a catalytic residue. Residues His320 and His326 each contribute to the Zn(2+) site. Residues Cys372 and Asn375 each coordinate Ca(2+). A propeptide spanning residues 377-401 (PLRTDTVSTPVSGNELLEAGKDYDR) is cleaved from the precursor. Residues 385 to 466 (TPVSGNELLE…GDCPRNPYHA (82 aa)) form the Disintegrin domain. Cystine bridges form between Cys422–Cys428, Cys427–Cys452, and Cys440–Cys459. The Cell attachment site signature appears at 444–446 (RGD).

This sequence belongs to the venom metalloproteinase (M12B) family. P-II subfamily. P-IIa sub-subfamily. Monomer. It depends on Zn(2+) as a cofactor. Expressed by the venom gland.

The protein localises to the secreted. Functionally, impairs hemostasis in the envenomed animal. Inhibits platelet aggregation induced by ADP, thrombin, platelet-activating factor and collagen. Acts by inhibiting fibrinogen interaction with platelet receptors GPIIb/GPIIIa (ITGA2B/ITGB3). The polypeptide is Zinc metalloproteinase/disintegrin (Deinagkistrodon acutus (Hundred-pace snake)).